Here is a 335-residue protein sequence, read N- to C-terminus: Phospho-N-acetylmuramoyl-pentapeptide-transferase (335 aa).

10 helical membrane passes run 3–23 (LTILAGLIAFAVTALAMPHFI), 53–73 (GGTVFLLVATSLSFVFALVYF), 78–98 (SLGLISGILLIVLIYGIIGFL), 118–138 (FTFQIVGGLVFYVIHVMPSGI), 143–163 (VFGYHWHLGFLYLCFVLFWVV), 174–194 (GIDGLASVSVVISLLAYGVIA), 200–220 (FDVLLLIGIMVGALLAFFLFN), 226–246 (IFMGDVGSLALGAMLAAISIA), 251–271 (WTLLVIGIVYVLETSSVMLQV), and 314–334 (VDAFLWALGLVASLIVLAILY).

Belongs to the glycosyltransferase 4 family. MraY subfamily. Mg(2+) is required as a cofactor.

The protein resides in the cell membrane. The catalysed reaction is UDP-N-acetyl-alpha-D-muramoyl-L-alanyl-gamma-D-glutamyl-L-lysyl-D-alanyl-D-alanine + di-trans,octa-cis-undecaprenyl phosphate = Mur2Ac(oyl-L-Ala-gamma-D-Glu-L-Lys-D-Ala-D-Ala)-di-trans,octa-cis-undecaprenyl diphosphate + UMP. It participates in cell wall biogenesis; peptidoglycan biosynthesis. Catalyzes the initial step of the lipid cycle reactions in the biosynthesis of the cell wall peptidoglycan: transfers peptidoglycan precursor phospho-MurNAc-pentapeptide from UDP-MurNAc-pentapeptide onto the lipid carrier undecaprenyl phosphate, yielding undecaprenyl-pyrophosphoryl-MurNAc-pentapeptide, known as lipid I. The sequence is that of Phospho-N-acetylmuramoyl-pentapeptide-transferase from Streptococcus equi subsp. equi (strain 4047).